Here is a 168-residue protein sequence, read N- to C-terminus: 6,7-dimethyl-8-ribityllumazine synthase (168 aa).

Residues tryptophan 31, 65-67 (SFE), and 90-92 (NVI) each bind 5-amino-6-(D-ribitylamino)uracil. 95 to 96 (ET) serves as a coordination point for (2S)-2-hydroxy-3-oxobutyl phosphate. The active-site Proton donor is histidine 98. Phenylalanine 123 provides a ligand contact to 5-amino-6-(D-ribitylamino)uracil. A (2S)-2-hydroxy-3-oxobutyl phosphate-binding site is contributed by arginine 137.

Belongs to the DMRL synthase family.

It catalyses the reaction (2S)-2-hydroxy-3-oxobutyl phosphate + 5-amino-6-(D-ribitylamino)uracil = 6,7-dimethyl-8-(1-D-ribityl)lumazine + phosphate + 2 H2O + H(+). It participates in cofactor biosynthesis; riboflavin biosynthesis; riboflavin from 2-hydroxy-3-oxobutyl phosphate and 5-amino-6-(D-ribitylamino)uracil: step 1/2. In terms of biological role, catalyzes the formation of 6,7-dimethyl-8-ribityllumazine by condensation of 5-amino-6-(D-ribitylamino)uracil with 3,4-dihydroxy-2-butanone 4-phosphate. This is the penultimate step in the biosynthesis of riboflavin. The protein is 6,7-dimethyl-8-ribityllumazine synthase of Christiangramia forsetii (strain DSM 17595 / CGMCC 1.15422 / KT0803) (Gramella forsetii).